Reading from the N-terminus, the 524-residue chain is 2-isopropylmalate synthase (524 aa).

The Pyruvate carboxyltransferase domain maps to V15–H275. The Mn(2+) site is built by D24, H212, H214, and N248. The interval R401 to F524 is regulatory domain.

Belongs to the alpha-IPM synthase/homocitrate synthase family. LeuA type 1 subfamily. As to quaternary structure, homodimer. It depends on Mn(2+) as a cofactor.

The protein resides in the cytoplasm. It carries out the reaction 3-methyl-2-oxobutanoate + acetyl-CoA + H2O = (2S)-2-isopropylmalate + CoA + H(+). The protein operates within amino-acid biosynthesis; L-leucine biosynthesis; L-leucine from 3-methyl-2-oxobutanoate: step 1/4. Functionally, catalyzes the condensation of the acetyl group of acetyl-CoA with 3-methyl-2-oxobutanoate (2-ketoisovalerate) to form 3-carboxy-3-hydroxy-4-methylpentanoate (2-isopropylmalate). This chain is 2-isopropylmalate synthase, found in Caulobacter vibrioides (strain ATCC 19089 / CIP 103742 / CB 15) (Caulobacter crescentus).